Consider the following 160-residue polypeptide: Ribonuclease HI (160 aa).

Positions 4–147 (TPNSVTLYTD…CDRLAVAAYQ (144 aa)) constitute an RNase H type-1 domain. Mg(2+)-binding residues include D13, E52, D74, and D139.

The protein belongs to the RNase H family. As to quaternary structure, monomer. Mg(2+) serves as cofactor.

The protein localises to the cytoplasm. It carries out the reaction Endonucleolytic cleavage to 5'-phosphomonoester.. Its function is as follows. Endonuclease that specifically degrades the RNA of RNA-DNA hybrids. This Synechocystis sp. (strain ATCC 27184 / PCC 6803 / Kazusa) protein is Ribonuclease HI (rnhA).